The sequence spans 452 residues: Bifunctional protein GlmU (452 aa).

The pyrophosphorylase stretch occupies residues 1-226 (MVAVAILAAG…SQEILGINDR (226 aa)). Residues 7–10 (LAAG), lysine 21, glutamine 73, and 78–79 (GT) contribute to the UDP-N-acetyl-alpha-D-glucosamine site. Residue aspartate 103 participates in Mg(2+) binding. Glycine 140, glutamate 155, asparagine 170, and asparagine 224 together coordinate UDP-N-acetyl-alpha-D-glucosamine. Position 224 (asparagine 224) interacts with Mg(2+). The linker stretch occupies residues 227–247 (LQLADSFRILQERIRQQWMLA). Residues 248 to 452 (GVTLVDPTSI…ENWSTPTTEQ (205 aa)) are N-acetyltransferase. UDP-N-acetyl-alpha-D-glucosamine is bound by residues arginine 329 and lysine 347. The Proton acceptor role is filled by histidine 359. UDP-N-acetyl-alpha-D-glucosamine is bound by residues tyrosine 362 and asparagine 373. Acetyl-CoA-binding positions include alanine 376, 382–383 (NY), alanine 419, and arginine 436.

In the N-terminal section; belongs to the N-acetylglucosamine-1-phosphate uridyltransferase family. It in the C-terminal section; belongs to the transferase hexapeptide repeat family. Homotrimer. Mg(2+) is required as a cofactor.

The protein resides in the cytoplasm. The enzyme catalyses alpha-D-glucosamine 1-phosphate + acetyl-CoA = N-acetyl-alpha-D-glucosamine 1-phosphate + CoA + H(+). It carries out the reaction N-acetyl-alpha-D-glucosamine 1-phosphate + UTP + H(+) = UDP-N-acetyl-alpha-D-glucosamine + diphosphate. Its pathway is nucleotide-sugar biosynthesis; UDP-N-acetyl-alpha-D-glucosamine biosynthesis; N-acetyl-alpha-D-glucosamine 1-phosphate from alpha-D-glucosamine 6-phosphate (route II): step 2/2. It participates in nucleotide-sugar biosynthesis; UDP-N-acetyl-alpha-D-glucosamine biosynthesis; UDP-N-acetyl-alpha-D-glucosamine from N-acetyl-alpha-D-glucosamine 1-phosphate: step 1/1. The protein operates within bacterial outer membrane biogenesis; LPS lipid A biosynthesis. Functionally, catalyzes the last two sequential reactions in the de novo biosynthetic pathway for UDP-N-acetylglucosamine (UDP-GlcNAc). The C-terminal domain catalyzes the transfer of acetyl group from acetyl coenzyme A to glucosamine-1-phosphate (GlcN-1-P) to produce N-acetylglucosamine-1-phosphate (GlcNAc-1-P), which is converted into UDP-GlcNAc by the transfer of uridine 5-monophosphate (from uridine 5-triphosphate), a reaction catalyzed by the N-terminal domain. This is Bifunctional protein GlmU from Synechococcus sp. (strain ATCC 27144 / PCC 6301 / SAUG 1402/1) (Anacystis nidulans).